The chain runs to 784 residues: Toll-like receptor 2 (784 aa).

Positions 1-20 are cleaved as a signal peptide; the sequence is MPRALWTAWVWAVIILSMEG. At 21 to 587 the chain is on the extracellular side; the sequence is ASHQASSLSC…ARLSLSECHR (567 aa). A disulfide bond links cysteine 30 and cysteine 36. 19 LRR repeats span residues 54-77, 78-101, 102-125, 126-150, 151-175, 176-199, 200-223, 224-250, 251-278, 279-308, 309-337, 338-361, 362-388, 389-414, 415-437, 438-457, 458-478, 479-500, and 501-524; these read VKSL…RCVN, LKTL…HLRN, LEYL…SLYA, LKFL…HLPN, LRTL…GLIF, LEEL…SIQN, ISHL…IVSS, LDCL…MNTS, VKKL…YVSG, ILEV…HLGN, VETL…LTGK, VKRV…HLKS, LEYL…AWPF, LQTL…TLKN, LNNL…WPGK, MKQL…CLPQ, TLEI…ILPQ, LKEL…FLPV, and LSVM…SFPQ. Asparagine 114 carries an N-linked (GlcNAc...) asparagine glycan. N-linked (GlcNAc...) asparagine glycosylation occurs at asparagine 199. N-linked (GlcNAc...) asparagine glycosylation is present at asparagine 248. A disulfide bridge connects residues cysteine 353 and cysteine 382. Cysteine 432 and cysteine 454 are disulfide-bonded. N-linked (GlcNAc...) asparagine glycosylation is present at asparagine 442. Residues 525-579 enclose the LRRCT domain; that stretch reads LKALEAGGNNFICSCDFLSFTQGQQALARVLVDWPDGYRCDAPSHVRGQRVQDAR. Residues 588-608 form a helical membrane-spanning segment; it reads AAVVSAVCCALFLLLLLTGVL. Residues 609-784 lie on the Cytoplasmic side of the membrane; the sequence is CHRFHGLWYM…WLNLRAAIRS (176 aa). The region spanning 639–782 is the TIR domain; that stretch reads LCYDAFVSYS…AFWLNLRAAI (144 aa). Lysine 754 is covalently cross-linked (Glycyl lysine isopeptide (Lys-Gly) (interchain with G-Cter in ubiquitin)). Positions 761-778 match the ATG16L1-binding motif motif; it reads YLEWPTDETQQEAFWLNL.

This sequence belongs to the Toll-like receptor family. As to quaternary structure, interacts with LY96, TLR1 and TLR6 (via extracellular domain). TLR2 seems to exist in heterodimers with either TLR1 or TLR6 before stimulation by the ligand. The heterodimers form bigger oligomers in response to their corresponding ligands as well as further heterotypic associations with other receptors such as CD14 and/or CD36. Binds MYD88 (via TIR domain). Interacts with TICAM1. Interacts with CNPY3. Interacts with ATG16L1. Interacts with PPP1R11. Interacts with TICAM2. Interacts with TIRAP. Ubiquitinated at Lys-754 by PPP1R11, leading to its degradation. Deubiquitinated by USP2. In terms of processing, glycosylation of Asn-442 is critical for secretion of the N-terminal ectodomain of TLR2.

Its subcellular location is the membrane. It localises to the cytoplasmic vesicle. The protein resides in the phagosome membrane. The protein localises to the membrane raft. Functionally, cooperates with LY96 to mediate the innate immune response to bacterial lipoproteins and other microbial cell wall components. Cooperates with TLR1 or TLR6 to mediate the innate immune response to bacterial lipoproteins or lipopeptides. Acts via MYD88 and TRAF6, leading to NF-kappa-B activation, cytokine secretion and the inflammatory response. May also promote apoptosis in response to lipoproteins. Forms activation clusters composed of several receptors depending on the ligand, these clusters trigger signaling from the cell surface and subsequently are targeted to the Golgi in a lipid-raft dependent pathway. Forms the cluster TLR2:TLR6:CD14:CD36 in response to diacylated lipopeptides and TLR2:TLR1:CD14 in response to triacylated lipopeptides. The protein is Toll-like receptor 2 (TLR2) of Capra hircus (Goat).